A 551-amino-acid chain; its full sequence is Prunin 1 Pru du 6.0101 (551 aa).

Residues 1 to 20 (MAKAFVFSLCLLLVFNGCLA) form the signal peptide. Disulfide bonds link Cys32–Cys65 and Cys108–Cys374. Positions 37 to 312 (LQAREPDNRI…ALNVNEETAR (276 aa)) constitute a Cupin type-1 1 domain. Disordered stretches follow at residues 111–194 (TFEE…QKTR), 238–293 (NPRK…NVFS), and 311–361 (ARNL…QQQG). Low complexity-rich tracts occupy residues 114–124 (ESQQSSQQGRQ), 132–148 (QQQQQGEQGRQQGQQEQ), and 168–185 (QEQQQGQQGRPQQQQQFR). 4 igE-binding regions span residues 118 to 132 (SSQQGRQQEQEQERQ), 145 to 159 (QQEQQQERQGRQQGR), 161 to 175 (QQEEGRQQEQQQGQQ), and 225 to 239 (LFHVSSDHNQLDQNP). A compositionally biased stretch (low complexity) spans 254-275 (QQGQSQPRQQGEQGRPGQHQQP). Residues 281-295 (QQEQQGSGNNVFSGF) form an igE-binding region. Polar residues-rich tracts occupy residues 282-293 (QEQQGSGNNVFS) and 311-323 (ARNLQGQNDNRNQ). A compositionally biased stretch (basic and acidic residues) spans 339-350 (GRQEREHEERQQ). The span at 351–361 (EQLQQERQQQG) shows a compositional bias: low complexity. The short motif at 367–372 (NGLEET) is the NGXEET; peptidase recognition motif element. Residues 380 to 529 (ENIGNPERAD…AYQISREQAR (150 aa)) enclose the Cupin type-1 2 domain. The tract at residues 510 to 524 (RALPDEVLANAYQIS) is igE-binding.

It belongs to the 11S seed storage protein (globulins) family. In terms of assembly, hexamer of two trimers; each subunit is composed of an acidic and a basic chain derived from a single precursor and linked by a disulfide bond. In terms of processing, proteolytically processed from a single precursor to produce an acidic and a basic chain that are linked by a disulfide bond. In terms of tissue distribution, expressed in seed (at protein level).

In terms of biological role, seed storage protein. In Prunus dulcis (Almond), this protein is Prunin 1 Pru du 6.0101.